Consider the following 66-residue polypeptide: Cold shock protein CspC (66 aa).

Positions 4 to 63 (GTVKWFNAEKGFGFIERENGDDVFVHFSAIQSDGFKSLDEGQKVSFDVEQGARGAQAANV) constitute a CSD domain.

The protein localises to the cytoplasm. The sequence is that of Cold shock protein CspC (cspC) from Bacillus subtilis (strain 168).